The chain runs to 433 residues: Tol-Pal system protein TolB (433 aa).

An N-terminal signal peptide occupies residues M1–A21.

This sequence belongs to the TolB family. As to quaternary structure, the Tol-Pal system is composed of five core proteins: the inner membrane proteins TolA, TolQ and TolR, the periplasmic protein TolB and the outer membrane protein Pal. They form a network linking the inner and outer membranes and the peptidoglycan layer.

It is found in the periplasm. Its function is as follows. Part of the Tol-Pal system, which plays a role in outer membrane invagination during cell division and is important for maintaining outer membrane integrity. In Pseudomonas fluorescens (strain Pf0-1), this protein is Tol-Pal system protein TolB.